Consider the following 338-residue polypeptide: Lipoate-protein ligase A (338 aa).

Positions P29–V216 constitute a BPL/LPL catalytic domain. Residues R71, G76 to F79, and K134 contribute to the ATP site. K134 is a (R)-lipoate binding site.

Belongs to the LplA family. As to quaternary structure, monomer.

The protein resides in the cytoplasm. The catalysed reaction is L-lysyl-[lipoyl-carrier protein] + (R)-lipoate + ATP = N(6)-[(R)-lipoyl]-L-lysyl-[lipoyl-carrier protein] + AMP + diphosphate + H(+). The protein operates within protein modification; protein lipoylation via exogenous pathway; protein N(6)-(lipoyl)lysine from lipoate: step 1/2. It functions in the pathway protein modification; protein lipoylation via exogenous pathway; protein N(6)-(lipoyl)lysine from lipoate: step 2/2. Functionally, catalyzes both the ATP-dependent activation of exogenously supplied lipoate to lipoyl-AMP and the transfer of the activated lipoyl onto the lipoyl domains of lipoate-dependent enzymes. This is Lipoate-protein ligase A from Escherichia coli O139:H28 (strain E24377A / ETEC).